Here is a 795-residue protein sequence, read N- to C-terminus: Phenylalanine--tRNA ligase beta subunit (795 aa).

A tRNA-binding domain is found at 39 to 148 (AGQFHGVVVG…IDAPLGVDLR (110 aa)). The 76-residue stretch at 401–476 (PQSATITLRR…RIYGYNNIPD (76 aa)) folds into the B5 domain. The Mg(2+) site is built by Asp454, Asp460, Glu463, and Glu464. In terms of domain architecture, FDX-ACB spans 701-794 (SRFPSNRRDI…LKQRFQASLR (94 aa)).

It belongs to the phenylalanyl-tRNA synthetase beta subunit family. Type 1 subfamily. Tetramer of two alpha and two beta subunits. The cofactor is Mg(2+).

Its subcellular location is the cytoplasm. It catalyses the reaction tRNA(Phe) + L-phenylalanine + ATP = L-phenylalanyl-tRNA(Phe) + AMP + diphosphate + H(+). The protein is Phenylalanine--tRNA ligase beta subunit of Photorhabdus laumondii subsp. laumondii (strain DSM 15139 / CIP 105565 / TT01) (Photorhabdus luminescens subsp. laumondii).